The chain runs to 272 residues: Indole-3-glycerol phosphate synthase (272 aa).

It belongs to the TrpC family.

It catalyses the reaction 1-(2-carboxyphenylamino)-1-deoxy-D-ribulose 5-phosphate + H(+) = (1S,2R)-1-C-(indol-3-yl)glycerol 3-phosphate + CO2 + H2O. It functions in the pathway amino-acid biosynthesis; L-tryptophan biosynthesis; L-tryptophan from chorismate: step 4/5. The polypeptide is Indole-3-glycerol phosphate synthase (Mycobacteroides abscessus (strain ATCC 19977 / DSM 44196 / CCUG 20993 / CIP 104536 / JCM 13569 / NCTC 13031 / TMC 1543 / L948) (Mycobacterium abscessus)).